The sequence spans 460 residues: Monocarboxylate transporter 12 (460 aa).

The Cytoplasmic segment spans residues 1 to 10 (MTQEKRSLHK). A run of 12 helical transmembrane segments spans residues 11 to 31 (TPPD…VTVC), 58 to 78 (AWIH…GSYV), 86 to 106 (VGII…SFAT), 115 to 135 (LGVL…AMVG), 148 to 168 (IAMS…QLLI), 177 to 197 (LLIL…MRPI), 246 to 266 (FIIL…PFVY), 282 to 302 (AFLM…FGWV), 329 to 349 (FLPI…FGYF), 354 to 374 (VALI…SSAL), 376 to 396 (VVFF…GWLV), and 406 to 426 (FLLS…AKII). Residues 427–460 (NRIKKNPQATVVRSSDIKQEVWTNGDVSCLNAIS) lie on the Cytoplasmic side of the membrane.

This sequence belongs to the major facilitator superfamily. Monocarboxylate porter (TC 2.A.1.13) family.

The protein localises to the cell membrane. It localises to the basolateral cell membrane. The enzyme catalyses creatine(in) = creatine(out). The catalysed reaction is guanidinoacetate(in) = guanidinoacetate(out). Functionally, functions as a transporter for creatine and as well for its precursor guanidinoacetate. Transport of creatine and GAA is independent of resting membrane potential and extracellular Na(+), Cl(-), or pH. Contributes to the process of creatine biosynthesis and distribution. In Xenopus laevis (African clawed frog), this protein is Monocarboxylate transporter 12 (slc16a12).